Reading from the N-terminus, the 509-residue chain is Lanosterol 14-alpha demethylase (509 aa).

The helical transmembrane segment at 30–50 threads the bilayer; it reads GNLLSMLLIACAFTLSLVYLI. Residue Cys455 coordinates heme.

Belongs to the cytochrome P450 family. The cofactor is heme. Post-translationally, ubiquitinated by MARCHF6, leading to proteasomal degradation. In terms of tissue distribution, ubiquitously expressed with highest levels in testis, ovary, adrenal, prostate, liver, kidney and lung.

Its subcellular location is the endoplasmic reticulum membrane. The protein localises to the microsome membrane. The enzyme catalyses a 14alpha-methyl steroid + 3 reduced [NADPH--hemoprotein reductase] + 3 O2 = a Delta(14) steroid + formate + 3 oxidized [NADPH--hemoprotein reductase] + 4 H2O + 4 H(+). It carries out the reaction lanosterol + 3 reduced [NADPH--hemoprotein reductase] + 3 O2 = 4,4-dimethyl-5alpha-cholesta-8,14,24-trien-3beta-ol + formate + 3 oxidized [NADPH--hemoprotein reductase] + 4 H2O + 4 H(+). The catalysed reaction is 24,25-dihydrolanosterol + 3 reduced [NADPH--hemoprotein reductase] + 3 O2 = 4,4-dimethyl-8,14-cholestadien-3beta-ol + formate + 3 oxidized [NADPH--hemoprotein reductase] + 4 H2O + 4 H(+). It catalyses the reaction a 14alpha-methyl steroid + reduced [NADPH--hemoprotein reductase] + O2 = a 14alpha-hydroxymethyl steroid + oxidized [NADPH--hemoprotein reductase] + H2O + H(+). The enzyme catalyses a 14alpha-hydroxymethyl steroid + reduced [NADPH--hemoprotein reductase] + O2 = a 14alpha-formyl steroid + oxidized [NADPH--hemoprotein reductase] + 2 H2O + H(+). It carries out the reaction a 14alpha-formyl steroid + reduced [NADPH--hemoprotein reductase] + O2 = a Delta(14) steroid + formate + oxidized [NADPH--hemoprotein reductase] + H2O + 2 H(+). The catalysed reaction is lanosterol + reduced [NADPH--hemoprotein reductase] + O2 = 32-hydroxylanosterol + oxidized [NADPH--hemoprotein reductase] + H2O + H(+). It catalyses the reaction 32-hydroxylanosterol + reduced [NADPH--hemoprotein reductase] + O2 = 32-oxolanosterol + oxidized [NADPH--hemoprotein reductase] + 2 H2O + H(+). The enzyme catalyses 32-oxolanosterol + reduced [NADPH--hemoprotein reductase] + O2 = 4,4-dimethyl-5alpha-cholesta-8,14,24-trien-3beta-ol + formate + oxidized [NADPH--hemoprotein reductase] + H2O + 2 H(+). It carries out the reaction 24,25-dihydrolanosterol + reduced [NADPH--hemoprotein reductase] + O2 = 32-hydroxy-24,25-dihydrolanosterol + oxidized [NADPH--hemoprotein reductase] + H2O + H(+). The catalysed reaction is 32-hydroxy-24,25-dihydrolanosterol + reduced [NADPH--hemoprotein reductase] + O2 = 32-oxo-24,25-dihydrolanosterol + oxidized [NADPH--hemoprotein reductase] + 2 H2O + H(+). It catalyses the reaction 32-oxo-24,25-dihydrolanosterol + reduced [NADPH--hemoprotein reductase] + O2 = 4,4-dimethyl-8,14-cholestadien-3beta-ol + formate + oxidized [NADPH--hemoprotein reductase] + H2O + 2 H(+). The protein operates within steroid biosynthesis; zymosterol biosynthesis; zymosterol from lanosterol: step 1/6. Its activity is regulated as follows. Inhibited by azalanstat. Inhibited by azole antifungal agents ketoconazole, itraconazole and fluconazole. Sterol 14alpha-demethylase that plays a critical role in the cholesterol biosynthesis pathway, being cholesterol the major sterol component in mammalian membranes as well as a precursor for bile acid and steroid hormone synthesis. Cytochrome P450 monooxygenase that catalyzes the three-step oxidative removal of the 14alpha-methyl group (C-32) of sterols such as lanosterol (lanosta-8,24-dien-3beta-ol) and 24,25-dihydrolanosterol (DHL) in the form of formate, and converts the sterols to 4,4-dimethyl-5alpha-cholesta-8,14,24-trien-3beta-ol and 4,4-dimethyl-8,14-cholestadien-3beta-ol, respectively, which are intermediates of cholesterol biosynthesis. Can also demethylate substrates not intrinsic to mammals, such as eburicol (24-methylene-24,25-dihydrolanosterol), but at a lower rate than DHL. The polypeptide is Lanosterol 14-alpha demethylase (Homo sapiens (Human)).